The following is a 208-amino-acid chain: Recombination protein RecR (208 aa).

The segment at 60–75 (CKVCHNICDDEVCSIC) adopts a C4-type zinc-finger fold. Residues 83-178 (SLVCVVENIK…RISVIARGVS (96 aa)) enclose the Toprim domain.

It belongs to the RecR family.

In terms of biological role, may play a role in DNA repair. It seems to be involved in an RecBC-independent recombinational process of DNA repair. It may act with RecF and RecO. The chain is Recombination protein RecR from Parabacteroides distasonis (strain ATCC 8503 / DSM 20701 / CIP 104284 / JCM 5825 / NCTC 11152).